The primary structure comprises 573 residues: ESX-1 secretion system protein EccA1 (573 aa).

334 to 341 (GPPGTGKT) lines the ATP pocket.

The protein belongs to the CbxX/CfxQ family. In terms of assembly, part of the ESX-1 / type VII secretion system (T7SS), which is composed of cytosolic and membrane components.

It is found in the cytoplasm. Functionally, part of the ESX-1 / type VII specialized secretion system (T7SS), which exports several proteins including EsxA and EsxB. EccA1 exhibits ATPase activity and may provide energy for the export of ESX-1 substrates. In Mycobacterium leprae (strain TN), this protein is ESX-1 secretion system protein EccA1.